The sequence spans 219 residues: tRNA (guanine-N(7)-)-methyltransferase (219 aa).

S-adenosyl-L-methionine-binding residues include Glu-46, Glu-71, Asn-100, and Asp-122. The active site involves Asp-122. Substrate contacts are provided by residues Lys-126, Asp-158, and 199–202 (TEYE).

It belongs to the class I-like SAM-binding methyltransferase superfamily. TrmB family.

It carries out the reaction guanosine(46) in tRNA + S-adenosyl-L-methionine = N(7)-methylguanosine(46) in tRNA + S-adenosyl-L-homocysteine. The protein operates within tRNA modification; N(7)-methylguanine-tRNA biosynthesis. In terms of biological role, catalyzes the formation of N(7)-methylguanine at position 46 (m7G46) in tRNA. The polypeptide is tRNA (guanine-N(7)-)-methyltransferase (Leuconostoc citreum (strain KM20)).